The following is a 644-amino-acid chain: Protein ETHYLENE-INSENSITIVE 3-like 1b (644 aa).

Disordered regions lie at residues 47 to 75 (QCVMGEGDLVDPPPESFPDAGEDDSDDDV) and 97 to 131 (ELQLSRGKDPAGGVVGDPSKPRQSQEQARRKKMSR). The span at 66 to 75 (AGEDDSDDDV) shows a compositional bias: acidic residues.

Belongs to the EIN3 family. Highly expressed in roots. Expressed at low levels in leaves and panicles.

It is found in the nucleus. Its function is as follows. Transcription factor acting as a positive regulator in the ethylene response pathway. Involved in wound signaling by binding specifically to the DNA sequence 5'-ATGTACCT-3' found in the promoter of some wound-inducible genes. Binds directly to the DNA sequence 5'-TGTTACAAATACC-3' in the promoter of the GA20OX2 gene to activate its expression at the transcriptional level during ethylene signaling. In Oryza sativa subsp. japonica (Rice), this protein is Protein ETHYLENE-INSENSITIVE 3-like 1b.